Reading from the N-terminus, the 266-residue chain is Calpain small subunit 1 (266 aa).

The residue at position 1 (Met1) is an N-acetylmethionine. A Phosphoserine modification is found at Ser6. The EF-hand 1; atypical domain occupies 94 to 128 (EEVRQFRRLFAQLAGDDMEVSATELMNILNKVVTR). Residues Ala107, Asp110, Glu112, Glu117, Asp135, Asp150, Asp152, Thr154, Lys156, and Glu161 each coordinate Ca(2+). 4 EF-hand domains span residues 137-170 (FGLDTCRSMVAVMDSDTTGKLGFEEFKYLWNNIK), 167-202 (NNIKKWQAIYKQFDVDRSGTICSRELPGAFEAAGFH), 203-231 (LNEHLYNMIIRRYSDEAGNMDFDNFISCL), and 232-266 (VRLDAMFRAFKSLDKDGTGQIQVNIQEWLQLTMYS). Residue Lys177 is modified to N6-acetyllysine. Asp180, Asp182, Ser184, Thr186, Glu191, and Asp223 together coordinate Ca(2+).

In terms of assembly, homodimer or heterodimer of a large (catalytic) and a small (regulatory) subunit. In presence of calcium, the heterodimer dissociates. In terms of processing, the N-terminus is blocked.

The protein resides in the cytoplasm. It is found in the cell membrane. Its function is as follows. Regulatory subunit of the calcium-regulated non-lysosomal thiol-protease which catalyzes limited proteolysis of substrates involved in cytoskeletal remodeling and signal transduction. Essential for embryonic development. The sequence is that of Calpain small subunit 1 (CAPNS1) from Oryctolagus cuniculus (Rabbit).